We begin with the raw amino-acid sequence, 156 residues long: Transcription inhibitor protein Gfh1 (156 aa).

The stretch at 1–74 (MAREVKLTKA…LEDILSRAVI (74 aa)) forms a coiled coil. Zn(2+) is bound by residues E20 and E24.

The protein belongs to the GreA/GreB family. Interacts with RNAP.

Functionally, inhibits all catalytic activities of RNA polymerase (RNAP) by partially occluding its substrate-binding site and preventing NTP binding. The sequence is that of Transcription inhibitor protein Gfh1 (gfh1) from Thermus thermophilus (strain ATCC 27634 / DSM 579 / HB8).